Reading from the N-terminus, the 482-residue chain is Probable cytochrome P450 508D1 (482 aa).

Residues 1-21 form a helical membrane-spanning segment; the sequence is MVYLKNILIFLIIFLINPLVK. Cysteine 428 is a binding site for heme.

The protein belongs to the cytochrome P450 family. Requires heme as cofactor.

The protein resides in the membrane. The chain is Probable cytochrome P450 508D1 (cyp508D1) from Dictyostelium discoideum (Social amoeba).